We begin with the raw amino-acid sequence, 295 residues long: GTPase Era (295 aa).

The Era-type G domain maps to 3–171 (KSGFITVIGR…LELMKKYLPE (169 aa)). The interval 11-18 (GRPNVGKS) is G1. Residue 11 to 18 (GRPNVGKS) participates in GTP binding. Residues 37–41 (QTTRN) are G2. Residues 58–61 (DTPG) form a G3 region. GTP is bound by residues 58–62 (DTPGM) and 120–123 (NKID). The tract at residues 120–123 (NKID) is G4. The G5 stretch occupies residues 150-152 (ISA). Residues 202 to 279 (LSEEVPHGIA…SLKVWVKVKK (78 aa)) form the KH type-2 domain.

This sequence belongs to the TRAFAC class TrmE-Era-EngA-EngB-Septin-like GTPase superfamily. Era GTPase family. As to quaternary structure, monomer.

The protein localises to the cytoplasm. It localises to the cell membrane. Functionally, an essential GTPase that binds both GDP and GTP, with rapid nucleotide exchange. Plays a role in 16S rRNA processing and 30S ribosomal subunit biogenesis and possibly also in cell cycle regulation and energy metabolism. The sequence is that of GTPase Era from Clostridium tetani (strain Massachusetts / E88).